Here is a 309-residue protein sequence, read N- to C-terminus: MNRSDLLENPRTQTESGFLLIHKPVGMTSSDLVVTVRKKLGFKKVGHTGTLDRAASGLMILPIGSCTSFSSVFLEKEKSYEAWVKPGESTDSGDKEGEILESLSKEQTETWFQEHQEKLRNLFEQVPTWETQEAPEVSALKVNGRRRSDLFREGVALVPVVRKIKIYRYELGKFSPESISFQIRVSAGTYIRKIVMDISDRIGFPLRLEKLVRTSIGKLNLNQADSYESLLDGKIKIHPPETILDFPTVEVPDTEVRNVLNGRKIKLEWIPVNEFLLVSPEEEILAWCKKEEHGIHELDYKYLRVFPKN.

Catalysis depends on Asp52, which acts as the Nucleophile.

It belongs to the pseudouridine synthase TruB family. Type 1 subfamily.

The catalysed reaction is uridine(55) in tRNA = pseudouridine(55) in tRNA. Functionally, responsible for synthesis of pseudouridine from uracil-55 in the psi GC loop of transfer RNAs. This chain is tRNA pseudouridine synthase B, found in Leptospira interrogans serogroup Icterohaemorrhagiae serovar Lai (strain 56601).